The chain runs to 146 residues: Large ribosomal subunit protein uL16 (146 aa).

The protein belongs to the universal ribosomal protein uL16 family. As to quaternary structure, part of the 50S ribosomal subunit.

Functionally, binds 23S rRNA and is also seen to make contacts with the A and possibly P site tRNAs. This is Large ribosomal subunit protein uL16 from Caulobacter sp. (strain K31).